Consider the following 243-residue polypeptide: Probable transcriptional regulatory protein LJ_0904 (243 aa).

The segment at 1 to 22 (MSGHSKWHNIQGRKNAQDAKRG) is disordered.

This sequence belongs to the TACO1 family.

It is found in the cytoplasm. The polypeptide is Probable transcriptional regulatory protein LJ_0904 (Lactobacillus johnsonii (strain CNCM I-12250 / La1 / NCC 533)).